Reading from the N-terminus, the 208-residue chain is Ras-related protein RABH1b (208 aa).

G16–T23 lines the GTP pocket. Residues Y38 to F46 carry the Effector region motif. GTP is bound by residues D64 to Q68, N122 to D125, and S152 to A153. S-geranylgeranyl cysteine attachment occurs at residues C206 and C208. C208 is modified (cysteine methyl ester).

It belongs to the small GTPase superfamily. Rab family. As to quaternary structure, interacts with the C-terminus of GC5, but not with GC3. Expressed in roots, stems, leaves and flowers.

It localises to the golgi apparatus membrane. Its subcellular location is the cytoplasm. The protein localises to the cytosol. Protein transport. Regulator of membrane traffic from the Golgi apparatus towards the endoplasmic reticulum (ER). Binds GTP and GDP and possesses intrinsic GTPase activity. The chain is Ras-related protein RABH1b (RABH1B) from Arabidopsis thaliana (Mouse-ear cress).